Reading from the N-terminus, the 614-residue chain is Dihydroxy-acid dehydratase (614 aa).

Aspartate 81 contacts Mg(2+). [2Fe-2S] cluster is bound at residue cysteine 122. Aspartate 123 and lysine 124 together coordinate Mg(2+). Lysine 124 carries the N6-carboxylysine modification. Cysteine 196 serves as a coordination point for [2Fe-2S] cluster. Glutamate 492 lines the Mg(2+) pocket. Serine 518 functions as the Proton acceptor in the catalytic mechanism.

It belongs to the IlvD/Edd family. As to quaternary structure, homodimer. [2Fe-2S] cluster serves as cofactor. It depends on Mg(2+) as a cofactor.

It catalyses the reaction (2R)-2,3-dihydroxy-3-methylbutanoate = 3-methyl-2-oxobutanoate + H2O. The enzyme catalyses (2R,3R)-2,3-dihydroxy-3-methylpentanoate = (S)-3-methyl-2-oxopentanoate + H2O. It functions in the pathway amino-acid biosynthesis; L-isoleucine biosynthesis; L-isoleucine from 2-oxobutanoate: step 3/4. The protein operates within amino-acid biosynthesis; L-valine biosynthesis; L-valine from pyruvate: step 3/4. Functionally, functions in the biosynthesis of branched-chain amino acids. Catalyzes the dehydration of (2R,3R)-2,3-dihydroxy-3-methylpentanoate (2,3-dihydroxy-3-methylvalerate) into 2-oxo-3-methylpentanoate (2-oxo-3-methylvalerate) and of (2R)-2,3-dihydroxy-3-methylbutanoate (2,3-dihydroxyisovalerate) into 2-oxo-3-methylbutanoate (2-oxoisovalerate), the penultimate precursor to L-isoleucine and L-valine, respectively. The protein is Dihydroxy-acid dehydratase of Ruegeria sp. (strain TM1040) (Silicibacter sp.).